The chain runs to 315 residues: Glucokinase-like protein CC_3167 (315 aa).

It belongs to the bacterial glucokinase family.

In Caulobacter vibrioides (strain ATCC 19089 / CIP 103742 / CB 15) (Caulobacter crescentus), this protein is Glucokinase-like protein CC_3167.